The chain runs to 96 residues: MRRYEVMIILDPTLDERTVAPSLEQFLSVVRNEGGSVEKVDVWGKRRLAYDIGKNSEGIYAVIDLTAKPSTVHELDRQLNLTEAVLRTKVLRPEIH.

Belongs to the bacterial ribosomal protein bS6 family.

Functionally, binds together with bS18 to 16S ribosomal RNA. The chain is Small ribosomal subunit protein bS6 from Thermobifida fusca (strain YX).